Here is a 952-residue protein sequence, read N- to C-terminus: MAWPCITRACCIARFWNQLDKADIAVPLVFTKYSEATEHPGAPPQPPAPPQPGLAPPSRAVAIETQPAQGESDAVARATGPAPGPSGDRETAAAPGRSGLGLGAASGSTSGSGPADSVMRQDYRAWKVQRPEPSCRPRSEYQPSDAPFERETQYQKDFRAWPLPRRGDHPWIPKPVQIPATSQPSPPVLGMPKRRPQSQERGPIQLSADARDPEGAGGAGVPAAGKASGADQRDTRRKAGPAWMVTRTEGHEEKPLPPAQSQTQEGGPAAGKASGADQRDTRRKAGPAWMVTRTEGHEEKPLPPAQSQTQEGGPAAGKASGADQRDTRRKAGPAWMVTRTEGHEETPLPPAQSQTQEGGPAAGKASGADQRDTRRKAGPAWMVTRTEGHEETPLPPAQSQTQEGGPAAGKASGADERDTRRKAGPAWMVRRSEGHEQTTAAHAQGTGPEGGKGRAVADALNRQIREEVTSTVSSSYRNEFRAWTDIKPVKPIKAKPQYKPPDDKMVHETSYSAQFKGEASKPTTADNKVVDRRRIRSLYSEPFKESPKVEKPSVQSSKPKKTSTSQKPLRKAKDKQVASGQAAKKKTTESPSATKPDDKEQSKEMNNKLAEAKESRVKPTSDKNQGPVAKEPHKDQGPVAPGLPKGQGPAVQEPLKDQGPMVPGLPKDQAPVVPGSLKGQSPTAPGPPKDQGAVLLGPMKDLGPVAPASVKDQDHMASELLKNKDSVPLAPAKAQSPLLPEPLKNQSPVVPARAKDQSFPAPAPTPLKDPGPVIPEPEKDGAPMVPERRKDQNASIMASLKNEAPVASESVKNQGLGGPEPAKDTGTDLKGHGSVFVAPVKSQGPVVPEPTKGQDPIIPALAKDQGPILPEPPKNQGPPVVLGPIKNQDPVIPVPLKGQDPVVPAPTKDPGPTAPDPLKSQGPRGPQLPTVSPSPPVMIPTVPHAEYIEGSP.

Positions 1-15 are calmodulin-binding; it reads MAWPCITRACCIARF. Residues cysteine 5, cysteine 10, and cysteine 11 are each lipidated (S-palmitoyl cysteine). 2 disordered regions span residues 37–457 and 486–952; these read TEHP…RAVA and IKPV…EGSP. A compositionally biased stretch (pro residues) spans 41–55; it reads GAPPQPPAPPQPGLA. Serine 98 carries the phosphoserine modification. Residues 105–117 show a composition bias toward low complexity; it reads ASGSTSGSGPADS. Residues 116-139 form a mn 1 region; that stretch reads DSVMRQDYRAWKVQRPEPSCRPRS. The span at 119 to 139 shows a compositional bias: basic and acidic residues; the sequence is MRQDYRAWKVQRPEPSCRPRS. The calmodulin-binding stretch occupies residues 124-138; the sequence is RAWKVQRPEPSCRPR. Tyrosine 141 carries the phosphotyrosine modification. Residues 147–171 show a composition bias toward basic and acidic residues; that stretch reads PFERETQYQKDFRAWPLPRRGDHPW. The mn 2 stretch occupies residues 151-174; the sequence is ETQYQKDFRAWPLPRRGDHPWIPK. Residues 160 to 174 are calmodulin-binding; the sequence is AWPLPRRGDHPWIPK. A Phosphoserine modification is found at serine 185. The interval 187–201 is calmodulin-binding; the sequence is PVLGMPKRRPQSQER. A Phosphoserine modification is found at serine 207. The span at 221–230 shows a compositional bias: low complexity; sequence VPAAGKASGA. One copy of the Mc-1 repeat lies at 222–267; sequence PAAGKASGADQRDTRRKAGPAWMVTRTEGHEEKPLPPAQSQTQEGG. Residues 222-451 form a 5 X approximate tandem repeat Mc region; sequence PAAGKASGAD…HAQGTGPEGG (230 aa). Calmodulin-binding regions lie at residues 235 to 249, 280 to 294, 325 to 339, 373 to 387, 421 to 435, 481 to 495, 532 to 546, and 559 to 573; these read TRRK…TRTE, DTRR…VTRT, RDTR…MVTR, RKAG…SEGH, RAWT…IKAK, RRRI…FKES, and PKKT…RKAK. The stretch at 268–313 is one Mc-2 repeat; the sequence is PAAGKASGADQRDTRRKAGPAWMVTRTEGHEEKPLPPAQSQTQEGG. Residues 314–359 form a Mc-3 repeat; that stretch reads PAAGKASGADQRDTRRKAGPAWMVTRTEGHEETPLPPAQSQTQEGG. One copy of the Mc-4 repeat lies at 360–405; that stretch reads PAAGKASGADQRDTRRKAGPAWMVTRTEGHEETPLPPAQSQTQEGG. A Mc-5 repeat occupies 406–451; that stretch reads PAAGKASGADERDTRRKAGPAWMVRRSEGHEQTTAAHAQGTGPEGG. A mn 3 region spans residues 473–496; the sequence is SSSYRNEFRAWTDIKPVKPIKAKP. Residues 542-551 are compositionally biased toward basic and acidic residues; the sequence is PFKESPKVEK. The segment covering 552-567 has biased composition (low complexity); it reads PSVQSSKPKKTSTSQK. Residue serine 590 is modified to Phosphoserine. The segment covering 595–621 has biased composition (basic and acidic residues); that stretch reads KPDDKEQSKEMNNKLAEAKESRVKPTS. A Phosphoserine modification is found at serine 681. Residues 711-725 show a composition bias toward basic and acidic residues; that stretch reads KDQDHMASELLKNKD. Serine 736 carries the phosphoserine modification. Residues 761 to 775 are compositionally biased toward pro residues; that stretch reads APAPTPLKDPGPVIP. Basic and acidic residues-rich tracts occupy residues 776–792 and 821–831; these read EPEK…RKDQ and PAKDTGTDLKG. A compositionally biased stretch (pro residues) spans 903-915; it reads VPAPTKDPGPTAP. A Phosphoserine modification is found at serine 951.

Belongs to the STOP family. Interacts with calmodulin (via C-terminus); the interaction is dependent on Ca(2+). Interacts (via C-terminus) with TMEM106B (via N-terminus). Interacts with ZDHHC13 (via ANK repeats). Interacts with ZDHHC17 (via ANK repeats). In terms of processing, palmitoylated. Probably depalmitoylated by ABHD17A, ABHD17B and ABHD17C. During neuronal polarization, palmitoylation and depalmitoylation cycles regulate MAP6 shuttling between secretory vesicles and microtubules, and its polarized distribution in the axon. As to expression, isoform 1 is specifically expressed in adult brain. Isoform 2 is predominantly expressed in embryonic brain; expression persists at low levels in the adult brain.

It localises to the cytoplasm. The protein resides in the cytoskeleton. Its subcellular location is the golgi apparatus. The protein localises to the cell projection. It is found in the axon. It localises to the dendrite. The protein resides in the cytoplasmic vesicle. Its subcellular location is the secretory vesicle membrane. Functionally, involved in microtubule stabilization in many cell types, including neuronal cells. Specifically has microtubule cold stabilizing activity. Involved in dendrite morphogenesis and maintenance by regulating lysosomal trafficking via its interaction with TMEM106B. Regulates KIF5A-mediated axonal cargo transport. Regulates axonal growth during neuron polarization. In Rattus norvegicus (Rat), this protein is Microtubule-associated protein 6 (Map6).